The primary structure comprises 481 residues: Ribosomal RNA small subunit methyltransferase F (481 aa).

S-adenosyl-L-methionine is bound by residues 125–131 (AAAPGSK), Glu149, Asp176, and Asp194. Catalysis depends on Cys247, which acts as the Nucleophile.

It belongs to the class I-like SAM-binding methyltransferase superfamily. RsmB/NOP family.

Its subcellular location is the cytoplasm. It carries out the reaction cytidine(1407) in 16S rRNA + S-adenosyl-L-methionine = 5-methylcytidine(1407) in 16S rRNA + S-adenosyl-L-homocysteine + H(+). Specifically methylates the cytosine at position 1407 (m5C1407) of 16S rRNA. This chain is Ribosomal RNA small subunit methyltransferase F, found in Psychromonas ingrahamii (strain DSM 17664 / CCUG 51855 / 37).